The following is a 354-amino-acid chain: MRTWIEIDKENLKYNVLKLKEIANNKEILGVVKANAYGLGSIEIAKILKEVEVKLFGVANLEEAIELQEAGIKDKILILGASFEDELVEATKRGVHVAISSMGQLQFLVSKNLNPNIHLKFDTGMTRLGFEVDDAEKVIEYCKNNNLNLVGIFSHLSDSDGNTIETKNFTLEQIEKFKKIVNSLNLEYIHISNSAGITNFHNDILGNLVRLGIGMYSFTGNKKTPYLKNIFTIKSKILFIKKVKKDSFVSYGRHYTLPADSTYAVLPIGYADGLKKYLSKGGYVLINNHRCEIIGNICMDMTMIRVPKEIENSIKIGDEVTVINADILDNLNIPELCVWEFMTGIGRRVKRIIV.

K33 functions as the Proton acceptor; specific for D-alanine in the catalytic mechanism. At K33 the chain carries N6-(pyridoxal phosphate)lysine. R127 provides a ligand contact to substrate. Residue Y251 is the Proton acceptor; specific for L-alanine of the active site. Residue M299 coordinates substrate.

This sequence belongs to the alanine racemase family. Pyridoxal 5'-phosphate serves as cofactor.

The catalysed reaction is L-alanine = D-alanine. It participates in amino-acid biosynthesis; D-alanine biosynthesis; D-alanine from L-alanine: step 1/1. Functionally, catalyzes the interconversion of L-alanine and D-alanine. May also act on other amino acids. This is Alanine racemase (alr) from Fusobacterium nucleatum subsp. nucleatum (strain ATCC 25586 / DSM 15643 / BCRC 10681 / CIP 101130 / JCM 8532 / KCTC 2640 / LMG 13131 / VPI 4355).